The sequence spans 316 residues: 4-hydroxy-3-methylbut-2-enyl diphosphate reductase (316 aa).

Residue cysteine 12 participates in [4Fe-4S] cluster binding. (2E)-4-hydroxy-3-methylbut-2-enyl diphosphate is bound by residues histidine 41 and histidine 74. 2 residues coordinate dimethylallyl diphosphate: histidine 41 and histidine 74. 2 residues coordinate isopentenyl diphosphate: histidine 41 and histidine 74. Cysteine 96 lines the [4Fe-4S] cluster pocket. Histidine 124 contributes to the (2E)-4-hydroxy-3-methylbut-2-enyl diphosphate binding site. Histidine 124 is a dimethylallyl diphosphate binding site. Histidine 124 contributes to the isopentenyl diphosphate binding site. Glutamate 126 functions as the Proton donor in the catalytic mechanism. Threonine 169 contacts (2E)-4-hydroxy-3-methylbut-2-enyl diphosphate. Cysteine 199 lines the [4Fe-4S] cluster pocket. (2E)-4-hydroxy-3-methylbut-2-enyl diphosphate contacts are provided by serine 227, serine 228, asparagine 229, and serine 271. Positions 227, 228, 229, and 271 each coordinate dimethylallyl diphosphate. Serine 227, serine 228, asparagine 229, and serine 271 together coordinate isopentenyl diphosphate.

Belongs to the IspH family. [4Fe-4S] cluster serves as cofactor.

The enzyme catalyses isopentenyl diphosphate + 2 oxidized [2Fe-2S]-[ferredoxin] + H2O = (2E)-4-hydroxy-3-methylbut-2-enyl diphosphate + 2 reduced [2Fe-2S]-[ferredoxin] + 2 H(+). It carries out the reaction dimethylallyl diphosphate + 2 oxidized [2Fe-2S]-[ferredoxin] + H2O = (2E)-4-hydroxy-3-methylbut-2-enyl diphosphate + 2 reduced [2Fe-2S]-[ferredoxin] + 2 H(+). Its pathway is isoprenoid biosynthesis; dimethylallyl diphosphate biosynthesis; dimethylallyl diphosphate from (2E)-4-hydroxy-3-methylbutenyl diphosphate: step 1/1. It functions in the pathway isoprenoid biosynthesis; isopentenyl diphosphate biosynthesis via DXP pathway; isopentenyl diphosphate from 1-deoxy-D-xylulose 5-phosphate: step 6/6. Its function is as follows. Catalyzes the conversion of 1-hydroxy-2-methyl-2-(E)-butenyl 4-diphosphate (HMBPP) into a mixture of isopentenyl diphosphate (IPP) and dimethylallyl diphosphate (DMAPP). Acts in the terminal step of the DOXP/MEP pathway for isoprenoid precursor biosynthesis. This is 4-hydroxy-3-methylbut-2-enyl diphosphate reductase from Vibrio cholerae serotype O1 (strain ATCC 39315 / El Tor Inaba N16961).